A 747-amino-acid chain; its full sequence is ATP-dependent DNA helicase Hel308 (747 aa).

Residues Gln29 and 47–54 (VPTASGKT) each bind ATP. A Helicase ATP-binding domain is found at 34–200 (DAGVADGESL…WLDAELVDSS (167 aa)). The DEAH box signature appears at 145 to 148 (DEVH). The Helicase C-terminal domain occupies 234–434 (PTEAVVRETL…REPSMRTHLL (201 aa)). The interval 711 to 747 (AAGHQQPEMDGVTPDADVKESAAAAGTDDGQANLGDF) is disordered.

It belongs to the helicase family. Hel308 subfamily. As to quaternary structure, monomer.

It catalyses the reaction Couples ATP hydrolysis with the unwinding of duplex DNA by translocating in the 3'-5' direction.. The enzyme catalyses ATP + H2O = ADP + phosphate + H(+). DNA-dependent ATPase and 3'-5' DNA helicase that may be involved in repair of stalled replication forks. This is ATP-dependent DNA helicase Hel308 from Natronomonas pharaonis (strain ATCC 35678 / DSM 2160 / CIP 103997 / JCM 8858 / NBRC 14720 / NCIMB 2260 / Gabara) (Halobacterium pharaonis).